We begin with the raw amino-acid sequence, 131 residues long: Phosphoribosyl-AMP cyclohydrolase (131 aa).

Asp-82 is a binding site for Mg(2+). Cys-83 is a binding site for Zn(2+). Mg(2+) is bound by residues Asp-84 and Asp-86. Zn(2+) contacts are provided by Cys-99 and Cys-106.

The protein belongs to the PRA-CH family. In terms of assembly, homodimer. Requires Mg(2+) as cofactor. It depends on Zn(2+) as a cofactor.

The protein resides in the cytoplasm. The enzyme catalyses 1-(5-phospho-beta-D-ribosyl)-5'-AMP + H2O = 1-(5-phospho-beta-D-ribosyl)-5-[(5-phospho-beta-D-ribosylamino)methylideneamino]imidazole-4-carboxamide. The protein operates within amino-acid biosynthesis; L-histidine biosynthesis; L-histidine from 5-phospho-alpha-D-ribose 1-diphosphate: step 3/9. Its function is as follows. Catalyzes the hydrolysis of the adenine ring of phosphoribosyl-AMP. This Methanospirillum hungatei JF-1 (strain ATCC 27890 / DSM 864 / NBRC 100397 / JF-1) protein is Phosphoribosyl-AMP cyclohydrolase.